Here is an 86-residue protein sequence, read N- to C-terminus: Late effector protein 1 (86 aa).

Residues 1–24 form the signal peptide; it reads MRSHQMAAFFAVSLMMMVVLGALS.

Belongs to the lep1 family. Interacts at the cell wall with secreted rep1 repellent peptides.

Its subcellular location is the secreted. It is found in the cell wall. Functionally, core effector contributing to spore formation and tumor formation at the host plant. Modulates surface hydrophobicity promoting cell-cell or cell-surface contacts. Lep1 and rep1 interact in aerial hyphae to form a strong hydrophobic layer. Plays a crucial role in hyphal aggregation that might be a prerequisite for strong proliferation of diploid cells and for induction of the morphological changes associated with spore formation. In Mycosarcoma maydis (Corn smut fungus), this protein is Late effector protein 1.